The following is a 631-amino-acid chain: Probable methyltransferase PMT16 (631 aa).

At 1–14 (MNLFTRISSRTKKA) the chain is on the cytoplasmic side. Residues 15 to 35 (NLYYVTLVALLCIASYLLGIW) traverse the membrane as a helical; Signal-anchor for type II membrane protein segment. Residues 36–631 (QNTAVNPRAA…EDKNNTSALS (596 aa)) lie on the Lumenal side of the membrane. Residues Asn61, Asn230, and Asn626 are each glycosylated (N-linked (GlcNAc...) asparagine).

This sequence belongs to the methyltransferase superfamily.

It localises to the endoplasmic reticulum membrane. This is Probable methyltransferase PMT16 from Arabidopsis thaliana (Mouse-ear cress).